Reading from the N-terminus, the 282-residue chain is Averufin oxidase A (282 aa).

The protein belongs to the avfA family.

Its pathway is mycotoxin biosynthesis; aflatoxin biosynthesis. Functionally, involved in the conversion of averufin (AVF) to versiconal hemiacetal acetate (VHA) in the aflatoxin biosynthesis pathway. The chain is Averufin oxidase A (avfA) from Aspergillus flavus (strain ATCC 200026 / FGSC A1120 / IAM 13836 / NRRL 3357 / JCM 12722 / SRRC 167).